A 363-amino-acid chain; its full sequence is Protein RecA (363 aa).

An ATP-binding site is contributed by 79–86 (GPESSGKT).

The protein belongs to the RecA family.

The protein localises to the cytoplasm. Functionally, can catalyze the hydrolysis of ATP in the presence of single-stranded DNA, the ATP-dependent uptake of single-stranded DNA by duplex DNA, and the ATP-dependent hybridization of homologous single-stranded DNAs. It interacts with LexA causing its activation and leading to its autocatalytic cleavage. In Methylobacterium sp. (strain 4-46), this protein is Protein RecA.